The primary structure comprises 154 residues: Peptidoglycan amidase Tse1 (154 aa).

Cys7 and Cys148 form a disulfide bridge. The Nucleophile role is filled by Cys30. His91 acts as the Proton acceptor in catalysis.

In terms of assembly, forms a heterotetramer with Tsi1 consisting of two Tse1 dimers and two Tsi1 dimers. Formation of the complex inactivates Tse1 enzymatic activity.

It localises to the host membrane. The protein localises to the secreted. It carries out the reaction Hydrolysis of gamma-D-glutamyl bonds to the L-terminus (position 7) of meso-diaminopimelic acid (meso-A2pm) in 7-(L-Ala-gamma-D-Glu)-meso-A2pm and 7-(L-Ala-gamma-D-Glu)-7-(D-Ala)-meso-A2pm. It is required that the D-terminal amino and carboxy groups of meso-A2pm are unsubstituted.. Toxin secreted by the H1 type VI (H1-T6SS) secretion system into the periplasm of recipient cells. Degrades peptidoglycan via amidase activity thereby helping itself to compete with other bacteria. To protect itself, the bacterium synthesizes immunity protein Tsi1 that specifically interacts with and inactivates cognate toxin. This chain is Peptidoglycan amidase Tse1, found in Pseudomonas aeruginosa (strain ATCC 15692 / DSM 22644 / CIP 104116 / JCM 14847 / LMG 12228 / 1C / PRS 101 / PAO1).